We begin with the raw amino-acid sequence, 104 residues long: Large ribosomal subunit protein eL42 (104 aa).

Residues 22-56 (KVSQAKKSKDNPRAQGNRRYARKQRGYGGQTKPIL) are disordered.

This sequence belongs to the eukaryotic ribosomal protein eL42 family.

The protein is Large ribosomal subunit protein eL42 (RPL44) of Encephalitozoon cuniculi (strain GB-M1) (Microsporidian parasite).